The following is a 98-amino-acid chain: Large ribosomal subunit protein uL23 (98 aa).

It belongs to the universal ribosomal protein uL23 family. Part of the 50S ribosomal subunit. Contacts protein L29, and trigger factor when it is bound to the ribosome.

Its function is as follows. One of the early assembly proteins it binds 23S rRNA. One of the proteins that surrounds the polypeptide exit tunnel on the outside of the ribosome. Forms the main docking site for trigger factor binding to the ribosome. The polypeptide is Large ribosomal subunit protein uL23 (Rickettsia canadensis (strain McKiel)).